Reading from the N-terminus, the 529-residue chain is 56 kDa type-specific antigen (529 aa).

The N-terminal stretch at 1–22 (MKKIMLIASAMSALSLPFSASA) is a signal peptide. The chain crosses the membrane as a helical span at residues 67–87 (LTTSMPFGGTLAAGMTIAPGF). Residues 106 to 116 (GKTGSDADIRS) are compositionally biased toward basic and acidic residues. 2 disordered regions span residues 106 to 134 (GKTGSDADIRSGADSPMPQRYKLTPPQPT) and 392 to 424 (DGGCNGGGDNKKKRGASEDSDAGGASKGGKGKE). The chain crosses the membrane as a helical span at residues 477 to 492 (TGMVASGALGVAINAA).

The protein resides in the cell membrane. Its function is as follows. May be an adherent factor for rickettsial adsorption to the host-cell surface and a determinant of virulence of individual rickettsial strain. It is the major outer membrane protein. This chain is 56 kDa type-specific antigen, found in Orientia tsutsugamushi (Rickettsia tsutsugamushi).